Reading from the N-terminus, the 196-residue chain is Proteasome subunit beta 2 (196 aa).

A propeptide spans 1-6 (MEELPS) (removed in mature form; by autocatalysis). The Nucleophile role is filled by Thr7.

It belongs to the peptidase T1B family. In terms of assembly, the 20S proteasome core is composed of 14 alpha and 14 beta subunits that assemble into four stacked heptameric rings, resulting in a barrel-shaped structure. The two inner rings, each composed of seven catalytic beta subunits, are sandwiched by two outer rings, each composed of seven alpha subunits. The catalytic chamber with the active sites is on the inside of the barrel. Has a gated structure, the ends of the cylinder being occluded by the N-termini of the alpha-subunits. Is capped at one or both ends by the proteasome regulatory ATPase, PAN.

Its subcellular location is the cytoplasm. It catalyses the reaction Cleavage of peptide bonds with very broad specificity.. The formation of the proteasomal ATPase PAN-20S proteasome complex, via the docking of the C-termini of PAN into the intersubunit pockets in the alpha-rings, triggers opening of the gate for substrate entry. Interconversion between the open-gate and close-gate conformations leads to a dynamic regulation of the 20S proteasome proteolysis activity. Functionally, component of the proteasome core, a large protease complex with broad specificity involved in protein degradation. In Metallosphaera sedula (strain ATCC 51363 / DSM 5348 / JCM 9185 / NBRC 15509 / TH2), this protein is Proteasome subunit beta 2.